We begin with the raw amino-acid sequence, 646 residues long: Long-chain fatty acid transport protein 1 (646 aa).

Residues 1–13 (MRAPGAGTASVAS) lie on the Extracellular side of the membrane. The helical transmembrane segment at 14-34 (LALLWFLGLPWTWSAAAAFCV) threads the bilayer. Residues 35–646 (YVGGGGWRFL…ARICAGDFSL (612 aa)) lie on the Cytoplasmic side of the membrane. The tract at residues 191 to 475 (EVSEQLGKSL…YVSDSATNKK (285 aa)) is sufficient for oligomerization. 246–257 (YIYTSGTTGLPK) contacts AMP.

Belongs to the ATP-dependent AMP-binding enzyme family. Self-associates. May function as a homodimer. Interacts with EPRS1; mediates the translocation of SLC27A1 from the cytoplasm to the plasma membrane thereby increasing the uptake of long-chain fatty acids. Interacts with DGAT2 and this interaction is enhanced in the presence of ZFYVE1. Higher expression in white adipose tissue than in heart. Highest expression in skeletal muscle, heart and fat. Lower levels in brain, kidney, lung, liver and testis. No expression in spleen or intestine.

It is found in the cell membrane. The protein resides in the mitochondrion outer membrane. It localises to the endomembrane system. Its subcellular location is the cytoplasm. The catalysed reaction is a fatty acid(in) = a fatty acid(out). It catalyses the reaction (9Z)-octadecenoate(out) = (9Z)-octadecenoate(in). It carries out the reaction hexadecanoate(out) = hexadecanoate(in). The enzyme catalyses (5Z,8Z,11Z,14Z)-eicosatetraenoate(out) = (5Z,8Z,11Z,14Z)-eicosatetraenoate(in). The catalysed reaction is (9Z,12Z)-octadecadienoate(out) = (9Z,12Z)-octadecadienoate(in). It catalyses the reaction a long-chain fatty acid + ATP + CoA = a long-chain fatty acyl-CoA + AMP + diphosphate. It carries out the reaction (5Z,8Z,11Z,14Z)-eicosatetraenoate + ATP + CoA = (5Z,8Z,11Z,14Z)-eicosatetraenoyl-CoA + AMP + diphosphate. The enzyme catalyses a very long-chain fatty acid + ATP + CoA = a very long-chain fatty acyl-CoA + AMP + diphosphate. The catalysed reaction is tetracosanoate + ATP + CoA = tetracosanoyl-CoA + AMP + diphosphate. Inhibited by Triacsin C. Both insulin and muscle contraction stimulate translocation to the plasma membrane in muscle, increasing fatty acid transport activity. In terms of biological role, mediates the import of long-chain fatty acids (LCFA) into the cell by facilitating their transport at the plasma membrane. Also functions as an acyl-CoA ligase catalyzing the ATP-dependent formation of fatty acyl-CoA using LCFA and very-long-chain fatty acids (VLCFA) as substrates, which prevents fatty acid efflux from cells and might drive more fatty acid uptake. May act directly as a bona fide transporter, or alternatively, in a cytoplasmic or membrane-associated multimeric protein complex to trap and draw fatty acids towards accumulation. Plays a pivotal role in regulating available LCFA substrates from exogenous sources in tissues undergoing high levels of beta-oxidation or triglyceride synthesis. May be involved in regulation of cholesterol metabolism. Probably involved in fatty acid transport across the blood barrier. The sequence is that of Long-chain fatty acid transport protein 1 from Mus musculus (Mouse).